Reading from the N-terminus, the 310-residue chain is MKVAVLGAAGGIGQALSLLLKTQLPAGSELSLYDVAPVVPGVAVDLSHIPTDVKVTGFGKDDLASALVGSDIVLIPAGVPRKPGMDRSDLFNMNAGIVKNLVQGVADNCPNACVGIITNPVNTTVPIAAEVLKKAGCYDKRKLFGVTTLDVIRSEAFVGELRGLNPENVNVPVIGGHSGTTILPLLSQVEGVEFTEQEIKDLTHRIQNAGTEVVEAKAGGGSATLSMGQAAARFALSLLKGLQGQDTIECTYVEGPGDNAKFFAQPVRLGKNGAEEILSYGKLSAFEQKCMDEMLDGLKGDIQTGIDFAS.

Residues Gly7 to Gly13 and Asp34 each bind NAD(+). Residues Arg81 and Arg87 each coordinate substrate. NAD(+) is bound by residues Asn94 and Ile117 to Asn119. Positions 119 and 153 each coordinate substrate. His177 (proton acceptor) is an active-site residue. Met227 lines the NAD(+) pocket.

It belongs to the LDH/MDH superfamily. MDH type 1 family. In terms of assembly, homodimer.

It carries out the reaction (S)-malate + NAD(+) = oxaloacetate + NADH + H(+). In terms of biological role, catalyzes the reversible oxidation of malate to oxaloacetate. The polypeptide is Malate dehydrogenase (Idiomarina loihiensis (strain ATCC BAA-735 / DSM 15497 / L2-TR)).